A 321-amino-acid polypeptide reads, in one-letter code: Ornithine carbamoyltransferase (321 aa).

Residues 53-56 (STRT), glutamine 80, arginine 104, and 131-134 (HPCQ) each bind carbamoyl phosphate. L-ornithine is bound by residues asparagine 166, aspartate 230, and 234–235 (SM). Carbamoyl phosphate is bound by residues 270–271 (CL) and arginine 298.

It belongs to the aspartate/ornithine carbamoyltransferase superfamily. OTCase family.

Its subcellular location is the cytoplasm. It carries out the reaction carbamoyl phosphate + L-ornithine = L-citrulline + phosphate + H(+). It participates in amino-acid degradation; L-arginine degradation via ADI pathway; carbamoyl phosphate from L-arginine: step 2/2. Functionally, reversibly catalyzes the transfer of the carbamoyl group from carbamoyl phosphate (CP) to the N(epsilon) atom of ornithine (ORN) to produce L-citrulline. The chain is Ornithine carbamoyltransferase from Bifidobacterium longum subsp. infantis (strain ATCC 15697 / DSM 20088 / JCM 1222 / NCTC 11817 / S12).